Here is a 142-residue protein sequence, read N- to C-terminus: E1B protein, small T-antigen (142 aa).

It belongs to the adenoviridae E1B 19 kDa protein family.

It is found in the host cell membrane. It localises to the host nucleus envelope. Its subcellular location is the host nucleus lamina. Its function is as follows. Putative adenovirus Bcl-2 homolog that inhibits apoptosis induced by TNF or FAS pathways, as well as p53-mediated apoptosis. Without E1B 19K function, virus production is compromised because of premature death of host cell. Interacts with Bax protein in cell lysates. The sequence is that of E1B protein, small T-antigen from Homo sapiens (Human).